Consider the following 290-residue polypeptide: Translin-associated protein X (290 aa).

Residues 1-31 (MNGKEGPGGFRKRKHDTFPHNQRREGKDASL) are disordered. A compositionally biased stretch (basic and acidic residues) spans 16-28 (DTFPHNQRREGKD). The interval 73–208 (LLHRITSAPD…MRMCINSVGN (136 aa)) is interaction with C1D. 2 residues coordinate Mg(2+): Glu129 and Glu197. Residue Lys279 forms a Glycyl lysine isopeptide (Lys-Gly) (interchain with G-Cter in SUMO2) linkage.

Belongs to the translin family. In terms of assembly, ring-shaped heterooctamer of six TSN and two TSNAX subunits. Interacts with GOLGA3, TSNAXIP1, SUN1 and AKAP9. Interacts with the homodimeric form of C1D following gamma-radiation. Interacts with TSN and C1D in a mutually exclusive manner. Post-translationally, sumoylated with SUMO1. As to expression, detected in heart, brain, lung, liver, kidney and testis.

The protein resides in the cytoplasm. It localises to the perinuclear region. It is found in the golgi apparatus. The protein localises to the nucleus. Acts in combination with TSN as an endonuclease involved in the activation of the RNA-induced silencing complex (RISC). Possible role in spermatogenesis. In Mus musculus (Mouse), this protein is Translin-associated protein X (Tsnax).